Reading from the N-terminus, the 263-residue chain is Mediator of RNA polymerase II transcription subunit 4 (263 aa).

A coiled-coil region spans residues 61–111 (LQLAAEQAGIEKNMDALREQVRKQDEEINQLQRQLKEAEQILATSIFQARQ). Disordered regions lie at residues 209–228 (APNQ…MGAG) and 235–263 (DTRA…SDSQ). The span at 251–263 (STESSSSSSSDSQ) shows a compositional bias: low complexity.

The protein belongs to the Mediator complex subunit 4 family. As to quaternary structure, component of the Mediator complex.

It localises to the nucleus. In terms of biological role, component of the Mediator complex, a coactivator involved in the regulated transcription of nearly all RNA polymerase II-dependent genes. Mediator functions as a bridge to convey information from gene-specific regulatory proteins to the basal RNA polymerase II transcription machinery. Mediator is recruited to promoters by direct interactions with regulatory proteins and serves as a scaffold for the assembly of a functional preinitiation complex with RNA polymerase II and the general transcription factors. The chain is Mediator of RNA polymerase II transcription subunit 4 (MED4) from Anopheles gambiae (African malaria mosquito).